A 264-amino-acid chain; its full sequence is Acyl-[acyl-carrier-protein]--UDP-N-acetylglucosamine O-acyltransferase (264 aa).

Belongs to the transferase hexapeptide repeat family. LpxA subfamily. Homotrimer.

The protein localises to the cytoplasm. It catalyses the reaction a (3R)-hydroxyacyl-[ACP] + UDP-N-acetyl-alpha-D-glucosamine = a UDP-3-O-[(3R)-3-hydroxyacyl]-N-acetyl-alpha-D-glucosamine + holo-[ACP]. It functions in the pathway glycolipid biosynthesis; lipid IV(A) biosynthesis; lipid IV(A) from (3R)-3-hydroxytetradecanoyl-[acyl-carrier-protein] and UDP-N-acetyl-alpha-D-glucosamine: step 1/6. Its function is as follows. Involved in the biosynthesis of lipid A, a phosphorylated glycolipid that anchors the lipopolysaccharide to the outer membrane of the cell. The polypeptide is Acyl-[acyl-carrier-protein]--UDP-N-acetylglucosamine O-acyltransferase (Haemophilus ducreyi (strain 35000HP / ATCC 700724)).